The primary structure comprises 196 residues: Protein LSM12 homolog A (196 aa).

One can recognise a Sm domain in the interval 3–73; it reads APGPGEYFSV…VSEVDIINDR (71 aa). In terms of domain architecture, AD spans 81-175; sequence ASLNISKLAN…IVEKHFRDVE (95 aa). Residues 174 to 196 are disordered; that stretch reads VESQKTMQRSQAQQTQKDSSLSS. The segment covering 177–196 has biased composition (polar residues); that stretch reads QKTMQRSQAQQTQKDSSLSS.

The protein belongs to the LSM12 family.

The sequence is that of Protein LSM12 homolog A (lsm12a) from Danio rerio (Zebrafish).